We begin with the raw amino-acid sequence, 321 residues long: Lipoyl synthase (321 aa).

Residues 1–21 form a disordered region; that stretch reads MRHRWEDRPVAPPPDGRPTEY. Residues Cys63, Cys68, Cys74, Cys89, Cys93, Cys96, and Ser302 each contribute to the [4Fe-4S] cluster site. In terms of domain architecture, Radical SAM core spans 75–291; the sequence is WNNRTATFMI…KKLGLEMGFS (217 aa). The disordered stretch occupies residues 301–321; the sequence is SSYHAHEQTEDARRGALGARG. Residues 304 to 314 show a composition bias toward basic and acidic residues; that stretch reads HAHEQTEDARR.

This sequence belongs to the radical SAM superfamily. Lipoyl synthase family. Requires [4Fe-4S] cluster as cofactor.

Its subcellular location is the cytoplasm. It catalyses the reaction [[Fe-S] cluster scaffold protein carrying a second [4Fe-4S](2+) cluster] + N(6)-octanoyl-L-lysyl-[protein] + 2 oxidized [2Fe-2S]-[ferredoxin] + 2 S-adenosyl-L-methionine + 4 H(+) = [[Fe-S] cluster scaffold protein] + N(6)-[(R)-dihydrolipoyl]-L-lysyl-[protein] + 4 Fe(3+) + 2 hydrogen sulfide + 2 5'-deoxyadenosine + 2 L-methionine + 2 reduced [2Fe-2S]-[ferredoxin]. Its pathway is protein modification; protein lipoylation via endogenous pathway; protein N(6)-(lipoyl)lysine from octanoyl-[acyl-carrier-protein]: step 2/2. Its function is as follows. Catalyzes the radical-mediated insertion of two sulfur atoms into the C-6 and C-8 positions of the octanoyl moiety bound to the lipoyl domains of lipoate-dependent enzymes, thereby converting the octanoylated domains into lipoylated derivatives. The chain is Lipoyl synthase from Rubrobacter xylanophilus (strain DSM 9941 / JCM 11954 / NBRC 16129 / PRD-1).